An 84-amino-acid chain; its full sequence is Acyl carrier protein (84 aa).

The region spanning 4–79 is the Carrier domain; that stretch reads NEIFEKVQDI…EVVDFIKSKL (76 aa). Ser39 is modified (O-(pantetheine 4'-phosphoryl)serine).

This sequence belongs to the acyl carrier protein (ACP) family. 4'-phosphopantetheine is transferred from CoA to a specific serine of apo-ACP by AcpS. This modification is essential for activity because fatty acids are bound in thioester linkage to the sulfhydryl of the prosthetic group.

Its subcellular location is the plastid. The protein resides in the chloroplast. Its pathway is lipid metabolism; fatty acid biosynthesis. In terms of biological role, carrier of the growing fatty acid chain in fatty acid biosynthesis. This Porphyra purpurea (Red seaweed) protein is Acyl carrier protein.